Reading from the N-terminus, the 85-residue chain is Putative membrane protein insertion efficiency factor (85 aa).

Belongs to the UPF0161 family.

The protein localises to the cell inner membrane. Could be involved in insertion of integral membrane proteins into the membrane. The protein is Putative membrane protein insertion efficiency factor of Shewanella sediminis (strain HAW-EB3).